A 478-amino-acid chain; its full sequence is Early growth response protein 4 (478 aa).

The disordered stretch occupies residues 15-37; it reads SKPTEGCAHTSPELPRLPARDAP. 3 C2H2-type zinc fingers span residues 372-396, 402-424, and 430-452; these read FACP…LRIH, FQCR…VRTH, and FACD…SKVH.

The protein belongs to the EGR C2H2-type zinc-finger protein family.

It is found in the nucleus. Its function is as follows. Transcriptional regulator. Recognizes and binds to the DNA sequence 5'-GCGGGGGCG-3' (GSG). Activates the transcription of target genes whose products are required for mitogenesis and differentiation. The polypeptide is Early growth response protein 4 (Egr4) (Rattus norvegicus (Rat)).